Here is a 485-residue protein sequence, read N- to C-terminus: Delta(14)-sterol reductase (485 aa).

5 helical membrane-spanning segments follow: residues 18–38 (FFGPPGAFAISFLLPVLVYVF), 77–97 (GLVSWEASAATAGYILLSLIL), 131–151 (LAILAAGTAAQGAEFPVWTFI), 155–175 (FIQILTANTIFSYAVATFVYV), and 319–339 (SLGPVGLAVMLSLIGLGFYIF). Residues K346, R350, L373, W378, and 385 to 386 (NY) contribute to the NADP(+) site. The helical transmembrane segment at 431-451 (AKGWGMLITYFYILYFAILLI) threads the bilayer. Residues D457, 461–465 (CHRKY), and Y472 contribute to the NADP(+) site.

Belongs to the ERG4/ERG24 family.

Its subcellular location is the membrane. The enzyme catalyses 4,4-dimethyl-5alpha-cholesta-8,24-dien-3beta-ol + NADP(+) = 4,4-dimethyl-5alpha-cholesta-8,14,24-trien-3beta-ol + NADPH + H(+). Its pathway is steroid biosynthesis; zymosterol biosynthesis; zymosterol from lanosterol: step 2/6. Functionally, reduces the C14=C15 double bond of 4,4-dimethyl-cholesta-8,14,24-trienol to produce 4,4-dimethyl-cholesta-8,24-dienol. The polypeptide is Delta(14)-sterol reductase (Fusarium vanettenii (Neocosmospora pisi)).